We begin with the raw amino-acid sequence, 416 residues long: 4-hydroxy-3-methylbut-2-en-1-yl diphosphate synthase (flavodoxin) (416 aa).

Positions 304, 307, 350, and 357 each coordinate [4Fe-4S] cluster.

Belongs to the IspG family. It depends on [4Fe-4S] cluster as a cofactor.

The enzyme catalyses (2E)-4-hydroxy-3-methylbut-2-enyl diphosphate + oxidized [flavodoxin] + H2O + 2 H(+) = 2-C-methyl-D-erythritol 2,4-cyclic diphosphate + reduced [flavodoxin]. Its pathway is isoprenoid biosynthesis; isopentenyl diphosphate biosynthesis via DXP pathway; isopentenyl diphosphate from 1-deoxy-D-xylulose 5-phosphate: step 5/6. Converts 2C-methyl-D-erythritol 2,4-cyclodiphosphate (ME-2,4cPP) into 1-hydroxy-2-methyl-2-(E)-butenyl 4-diphosphate. This Rhizobium etli (strain CIAT 652) protein is 4-hydroxy-3-methylbut-2-en-1-yl diphosphate synthase (flavodoxin).